Consider the following 1755-residue polypeptide: Transposon Ty1-ML1 Gag-Pol polyprotein (1755 aa).

Polar residues-rich tracts occupy residues 1–23 (MESQ…SVTS), 48–60 (TKAN…TPAS), and 127–152 (QSQF…GNTF). 3 disordered regions span residues 1-88 (MESQ…YPQQ), 126-173 (PQSQ…RPPP), and 352-421 (GSRN…SKST). Over residues 153–165 (TDSSSADSDMTST) the composition is skewed to low complexity. The RNA-binding stretch occupies residues 299 to 401 (NNGIHINNKV…NSKSKTARAH (103 aa)). Residues 402–418 (NVSTSNNSPSTDNDSIS) are compositionally biased toward low complexity. The active-site For protease activity; shared with dimeric partner is Asp-461. Positions 583 to 640 (NVHTSESTRKYPYPFIHRMLAHANAQTIRYSLKNNTITYFNESDVDWSSAIDYQCPDC) are integrase-type zinc finger-like. Positions 660–835 (NSYEPFQYLH…AGLDISTLLP (176 aa)) constitute an Integrase catalytic domain. Mg(2+)-binding residues include Asp-671 and Asp-736. Disordered stretches follow at residues 956–1087 (SKAV…ETEK), 1092–1111 (RSPS…NIVP), and 1130–1171 (DLPL…DSNA). Residues 960–969 (SPTDSTPPST) are compositionally biased toward low complexity. Residues 1005-1015 (STPQISNIEST) show a composition bias toward polar residues. Residues 1038 to 1053 (ESSHASKSKDFRHSDS) show a composition bias toward basic and acidic residues. Composition is skewed to polar residues over residues 1054–1082 (YSEN…QISD) and 1101–1111 (PENNSSHNIVP). A Bipartite nuclear localization signal motif is present at residues 1178-1212 (KKRSLEDNETEIKVSRDTWNTKNMRSLEPPRSKKR). The region spanning 1338-1476 (NNYYITQLDI…DILGLEIKYQ (139 aa)) is the Reverse transcriptase Ty1/copia-type domain. Mg(2+) is bound by residues Asp-1346, Asp-1427, Asp-1428, Asp-1610, Glu-1652, and Asp-1685. The RNase H Ty1/copia-type domain occupies 1610 to 1752 (DASYGNQPYY…IKTFKLLTNK (143 aa)).

In terms of assembly, the capsid protein forms a homotrimer, from which the VLPs are assembled. The protease is a homodimer, whose active site consists of two apposed aspartic acid residues. Initially, virus-like particles (VLPs) are composed of the structural unprocessed proteins Gag and Gag-Pol, and also contain the host initiator methionine tRNA (tRNA(i)-Met) which serves as a primer for minus-strand DNA synthesis, and a dimer of genomic Ty RNA. Processing of the polyproteins occurs within the particle and proceeds by an ordered pathway, called maturation. First, the protease (PR) is released by autocatalytic cleavage of the Gag-Pol polyprotein yielding capsid protein p45 and a Pol-p154 precursor protein. This cleavage is a prerequisite for subsequent processing of Pol-p154 at the remaining sites to release the mature structural and catalytic proteins. Maturation takes place prior to the RT reaction and is required to produce transposition-competent VLPs.

The protein localises to the cytoplasm. It is found in the nucleus. The catalysed reaction is DNA(n) + a 2'-deoxyribonucleoside 5'-triphosphate = DNA(n+1) + diphosphate. It catalyses the reaction Endonucleolytic cleavage to 5'-phosphomonoester.. Its function is as follows. Capsid protein (CA) is the structural component of the virus-like particle (VLP), forming the shell that encapsulates the retrotransposons dimeric RNA genome. The particles are assembled from trimer-clustered units and there are holes in the capsid shells that allow for the diffusion of macromolecules. CA also has nucleocapsid-like chaperone activity, promoting primer tRNA(i)-Met annealing to the multipartite primer-binding site (PBS), dimerization of Ty1 RNA and initiation of reverse transcription. The aspartyl protease (PR) mediates the proteolytic cleavages of the Gag and Gag-Pol polyproteins after assembly of the VLP. Functionally, reverse transcriptase/ribonuclease H (RT) is a multifunctional enzyme that catalyzes the conversion of the retro-elements RNA genome into dsDNA within the VLP. The enzyme displays a DNA polymerase activity that can copy either DNA or RNA templates, and a ribonuclease H (RNase H) activity that cleaves the RNA strand of RNA-DNA heteroduplexes during plus-strand synthesis and hydrolyzes RNA primers. The conversion leads to a linear dsDNA copy of the retrotransposon that includes long terminal repeats (LTRs) at both ends. In terms of biological role, integrase (IN) targets the VLP to the nucleus, where a subparticle preintegration complex (PIC) containing at least integrase and the newly synthesized dsDNA copy of the retrotransposon must transit the nuclear membrane. Once in the nucleus, integrase performs the integration of the dsDNA into the host genome. The protein is Transposon Ty1-ML1 Gag-Pol polyprotein (TY1B-ML1) of Saccharomyces cerevisiae (strain ATCC 204508 / S288c) (Baker's yeast).